The chain runs to 369 residues: 5-amino-6-(D-ribitylamino)uracil--L-tyrosine 4-hydroxyphenyl transferase (369 aa).

The region spanning 56 to 292 (VTFVVNRNIN…AVARLYFGPL (237 aa)) is the Radical SAM core domain. 3 residues coordinate [4Fe-4S] cluster: C70, C74, and C77.

This sequence belongs to the radical SAM superfamily. CofH family. In terms of assembly, consists of two subunits, CofG and CofH. The cofactor is [4Fe-4S] cluster.

It catalyses the reaction 5-amino-6-(D-ribitylamino)uracil + L-tyrosine + S-adenosyl-L-methionine = 5-amino-5-(4-hydroxybenzyl)-6-(D-ribitylimino)-5,6-dihydrouracil + 2-iminoacetate + 5'-deoxyadenosine + L-methionine + H(+). It participates in cofactor biosynthesis; coenzyme F0 biosynthesis. Functionally, catalyzes the radical-mediated synthesis of 5-amino-5-(4-hydroxybenzyl)-6-(D-ribitylimino)-5,6-dihydrouracil from 5-amino-6-(D-ribitylamino)uracil and L-tyrosine. The sequence is that of 5-amino-6-(D-ribitylamino)uracil--L-tyrosine 4-hydroxyphenyl transferase from Methanopyrus kandleri (strain AV19 / DSM 6324 / JCM 9639 / NBRC 100938).